The chain runs to 305 residues: UPF0612 protein C337.02c (305 aa).

2 coiled-coil regions span residues 27-63 (IERY…MKYE) and 120-207 (NDMN…DARS).

It belongs to the UPF0612 family.

In Schizosaccharomyces pombe (strain 972 / ATCC 24843) (Fission yeast), this protein is UPF0612 protein C337.02c.